A 1381-amino-acid polypeptide reads, in one-letter code: DNA-directed RNA polymerase subunit beta (1381 aa).

It belongs to the RNA polymerase beta chain family. The RNAP catalytic core consists of 2 alpha, 1 beta, 1 beta' and 1 omega subunit. When a sigma factor is associated with the core the holoenzyme is formed, which can initiate transcription.

The enzyme catalyses RNA(n) + a ribonucleoside 5'-triphosphate = RNA(n+1) + diphosphate. In terms of biological role, DNA-dependent RNA polymerase catalyzes the transcription of DNA into RNA using the four ribonucleoside triphosphates as substrates. This is DNA-directed RNA polymerase subunit beta from Sulfurimonas denitrificans (strain ATCC 33889 / DSM 1251) (Thiomicrospira denitrificans (strain ATCC 33889 / DSM 1251)).